A 127-amino-acid chain; its full sequence is Large ribosomal subunit protein bL20 (127 aa).

The protein belongs to the bacterial ribosomal protein bL20 family.

Binds directly to 23S ribosomal RNA and is necessary for the in vitro assembly process of the 50S ribosomal subunit. It is not involved in the protein synthesizing functions of that subunit. In Corynebacterium jeikeium (strain K411), this protein is Large ribosomal subunit protein bL20.